The primary structure comprises 254 residues: Bowman-Birk type bran trypsin inhibitor (254 aa).

An N-terminal signal peptide occupies residues 1–22 (MSNTTMATSTILLFLLAGLAAA). A propeptide spanning residues 23–118 (HGDGDTTIRL…KCTAALDGLS (96 aa)) is cleaved from the precursor. Repeats lie at residues 46 to 120 (KPWD…LSME), 121 to 187 (RPWK…LCTP), and 188 to 251 (RPWG…CKPR). Intrachain disulfides connect cysteine 51/cysteine 248, cysteine 125/cysteine 185, cysteine 126/cysteine 143, cysteine 152/cysteine 159, cysteine 156/cysteine 172, cysteine 193/cysteine 248, cysteine 194/cysteine 209, cysteine 199/cysteine 207, cysteine 216/cysteine 223, and cysteine 220/cysteine 236. The propeptide occupies 252–254 (AEN).

Belongs to the Bowman-Birk serine protease inhibitor family. Expressed in roots, leaves and flowers.

The polypeptide is Bowman-Birk type bran trypsin inhibitor (RBBI3.3) (Oryza sativa subsp. indica (Rice)).